Here is a 210-residue protein sequence, read N- to C-terminus: MKKAILGKKVGMTQIFSEEGEVMPVTVVKAGPCSVVQKKVEDTDGYNAVQIGFEDKKENKTKKPEKGHFEKAGVNPKKHLTEFELESMENLEVGQELTVEQFEVGDQIDVTGTSKSKGFQGTIKRFKHSTGPKTHGSRFYRAPGSLGSMDISRVFKGQTLPGRMGGNTVTVQRLEVVDVDKENNLLLVKGAVPGPKKGLLKIVDSVKAKS.

Belongs to the universal ribosomal protein uL3 family. In terms of assembly, part of the 50S ribosomal subunit. Forms a cluster with proteins L14 and L19.

In terms of biological role, one of the primary rRNA binding proteins, it binds directly near the 3'-end of the 23S rRNA, where it nucleates assembly of the 50S subunit. The protein is Large ribosomal subunit protein uL3 of Natranaerobius thermophilus (strain ATCC BAA-1301 / DSM 18059 / JW/NM-WN-LF).